The following is a 207-amino-acid chain: Superoxide dismutase [Mn] (207 aa).

4 residues coordinate Mn(2+): histidine 28, histidine 76, aspartate 160, and histidine 164.

Belongs to the iron/manganese superoxide dismutase family. Requires Mn(2+) as cofactor.

The enzyme catalyses 2 superoxide + 2 H(+) = H2O2 + O2. In terms of biological role, destroys superoxide anion radicals which are normally produced within the cells and which are toxic to biological systems. This is Superoxide dismutase [Mn] (sodA) from Mycobacterium intracellulare (strain ATCC 13950 / DSM 43223 / JCM 6384 / NCTC 13025 / 3600).